The following is a 408-amino-acid chain: Succinylornithine transaminase (408 aa).

At K252 the chain carries N6-(pyridoxal phosphate)lysine.

This sequence belongs to the class-III pyridoxal-phosphate-dependent aminotransferase family. AstC subfamily. Pyridoxal 5'-phosphate is required as a cofactor.

It catalyses the reaction N(2)-succinyl-L-ornithine + 2-oxoglutarate = N-succinyl-L-glutamate 5-semialdehyde + L-glutamate. The protein operates within amino-acid degradation; L-arginine degradation via AST pathway; L-glutamate and succinate from L-arginine: step 3/5. In terms of biological role, catalyzes the transamination of N(2)-succinylornithine and alpha-ketoglutarate into N(2)-succinylglutamate semialdehyde and glutamate. Can also act as an acetylornithine aminotransferase. The protein is Succinylornithine transaminase of Salmonella paratyphi A (strain ATCC 9150 / SARB42).